The sequence spans 114 residues: uncharacterized protein (114 aa).

One can recognise an HIT domain in the interval 6–114 (IFSKIIRREI…GGRPFSWPPG (109 aa)). The short motif at 98-102 (HLHLH) is the Histidine triad motif element.

This is an uncharacterized protein from Synechocystis sp. (strain ATCC 27184 / PCC 6803 / Kazusa).